Reading from the N-terminus, the 95-residue chain is 6 kDa early secretory antigenic target (95 aa).

The next 2 helical transmembrane spans lie at 11 to 43 (IEAA…AAAW) and 49 to 85 (EAYQ…AMAS). Residues 56–87 (QKWDATATELNNALQNLARTISEAGQAMASTE) adopt a coiled-coil conformation.

It belongs to the WXG100 family. ESAT-6 subfamily. Forms a tight 1:1 complex with EsxB (CFP-10).

Its subcellular location is the secreted. It is found in the host membrane. In terms of biological role, a secreted protein. Acts as a strong host T-cell antigen. Plays a number of roles in modulating the host's immune response to infection as well as being responsible for bacterial escape into the host cytoplasm. The sequence is that of 6 kDa early secretory antigenic target (esxA) from Mycobacterium bovis (strain ATCC BAA-935 / AF2122/97).